A 358-amino-acid chain; its full sequence is MNFTVGFKPLLGDAHSMDNLEKQLICPICLEMFSKPVVILPCQHNLCRKCANDVFQASNPLWQSRGSTTVSSGGRFRCPSCRHEVVLDRHGVYGLQRNLLVENIIDIYKQESSRPLHSKAEQHLMCEEHEEEKINIYCLSCEVPTCSLCKVFGAHKDCEVAPLPTIYKRQKSELSDGIAMLVAGNDRVQAVITQMEEVCQTIEDNSRRQKQLLNQRFESLCAVLEERKGELLQALAREQEEKLQRVRGLIRQYGDHLEASSKLVETAIQSMEEPQMALYLQQAKELINKVGAMSKVELAGRPEPGYESMEQFTVSVEHVAEMLRTIDFQPGASGEEEEVAPDGDEGSAGQEEERPDGP.

The RING-type zinc finger occupies 26–82; sequence CPICLEMFSKPVVILPCQHNLCRKCANDVFQASNPLWQSRGSTTVSSGGRFRCPSCR. Residues 121–163 form a B box-type zinc finger; that stretch reads EQHLMCEEHEEEKINIYCLSCEVPTCSLCKVFGAHKDCEVAPL. Residues Cys126, His129, Cys149, and His155 each contribute to the Zn(2+) site. The mediates microtubule-binding and homooligomerization stretch occupies residues 168–211; sequence KRQKSELSDGIAMLVAGNDRVQAVITQMEEVCQTIEDNSRRQKQ. Residues 194–258 adopt a coiled-coil conformation; sequence QMEEVCQTIE…LIRQYGDHLE (65 aa). One can recognise a COS domain in the interval 271 to 329; it reads MEEPQMALYLQQAKELINKVGAMSKVELAGRPEPGYESMEQFTVSVEHVAEMLRTIDFQ. Residues 326 to 358 are disordered; it reads IDFQPGASGEEEEVAPDGDEGSAGQEEERPDGP. The span at 334–345 shows a compositional bias: acidic residues; it reads GEEEEVAPDGDE.

Homooligomer and heterooligomer. Interacts with TRIM63 and probably with TRIM55. Interacts with tubulin.

It is found in the cytoplasm. The protein localises to the cytoskeleton. The protein resides in the myofibril. It localises to the sarcomere. Its subcellular location is the z line. In terms of biological role, may bind and stabilize microtubules during myotubes formation. This chain is Tripartite motif-containing protein 54 (TRIM54), found in Pongo abelii (Sumatran orangutan).